Here is a 111-residue protein sequence, read N- to C-terminus: ATP-dependent Clp protease adapter protein ClpS (111 aa).

It belongs to the ClpS family. In terms of assembly, binds to the N-terminal domain of the chaperone ClpA.

Involved in the modulation of the specificity of the ClpAP-mediated ATP-dependent protein degradation. The chain is ATP-dependent Clp protease adapter protein ClpS from Corynebacterium aurimucosum (strain ATCC 700975 / DSM 44827 / CIP 107346 / CN-1) (Corynebacterium nigricans).